The following is a 238-amino-acid chain: Lytic polysaccharide monooxygenase NCU01050 (238 aa).

The N-terminal stretch at 1–15 (MKVLAPLVLASAASA) is a signal peptide. His-16 serves as a coordination point for Cu(2+). Glu-45 contacts O2. Cystine bridges form between Cys-54/Cys-186 and Cys-156/Cys-238. Asn-75 is a glycosylation site (N-linked (GlcNAc...) asparagine). His-99 lines the Cu(2+) pocket. O2-binding residues include His-172 and Gln-181. His-172 acts as the Proton donor in catalysis. Tyr-183 contributes to the Cu(2+) binding site.

This sequence belongs to the polysaccharide monooxygenase AA9 family. As to quaternary structure, monomer. It depends on Cu(2+) as a cofactor. N-linked glycans containing mannose and N-acetylglucosamine.

It is found in the secreted. The enzyme catalyses [(1-&gt;4)-beta-D-glucosyl]n+m + reduced acceptor + O2 = 4-dehydro-beta-D-glucosyl-[(1-&gt;4)-beta-D-glucosyl]n-1 + [(1-&gt;4)-beta-D-glucosyl]m + acceptor + H2O.. The protein operates within glycan metabolism; cellulose degradation. Inhibited by increasing levels of ascorbic acid. Its function is as follows. Catalyzes the oxidative cleavage of glycosidic bonds in cellulosic substrates via a copper-dependent mechanism. In the presence of an exogenous reductant ascorbic acid, degrades phosphoric acid swollen cellulose (PASC) to cello-oligosaccharides and 4-ketoaldoses, the end products oxidized at the non-reducing end. Somewhat active toward tamarind xyloglucan and konjac glucomannan, with improved activity with glucomannan in the presence of PASC. H(2)O(2) is able to substitute for O(2) in reactions with PASC, xyloglucan and glucomannan. Very weak activity on cellopentaose. No activity with birchwood xylan or ivory nut mannan. Disrupts plant cell wall polysaccharide substrates, such as recalcitrant crystalline cellulose. The protein is Lytic polysaccharide monooxygenase NCU01050 of Neurospora crassa (strain ATCC 24698 / 74-OR23-1A / CBS 708.71 / DSM 1257 / FGSC 987).